The following is a 368-amino-acid chain: Agmatine deiminase (368 aa).

Cys-357 (amidino-cysteine intermediate) is an active-site residue.

The protein belongs to the agmatine deiminase family. As to quaternary structure, homodimer.

The enzyme catalyses agmatine + H2O = N-carbamoylputrescine + NH4(+). The protein operates within amine and polyamine biosynthesis; putrescine biosynthesis via agmatine pathway; N-carbamoylputrescine from agmatine: step 1/1. Mediates the hydrolysis of agmatine into N-carbamoylputrescine in the arginine decarboxylase (ADC) pathway of putrescine biosynthesis, a basic polyamine. The chain is Agmatine deiminase from Pseudomonas putida (strain ATCC 47054 / DSM 6125 / CFBP 8728 / NCIMB 11950 / KT2440).